Here is a 964-residue protein sequence, read N- to C-terminus: Syndetin (964 aa).

The residue at position 1 (Met1) is an N-acetylmethionine. Residues 1–25 (MQKIKSLMTRQGLKSPPESLNDLGA) form a disordered region. Ser15 carries the phosphoserine modification. Coiled-coil stretches lie at residues 81–107 (LNLQELEEYRDKLKQQQSAVSKKVADL) and 216–244 (YSCISELNSKLQDTLEQIEEQLDVALSKI). Phosphoserine occurs at positions 494, 498, 559, and 561. A disordered region spans residues 532-563 (DEETEDVLASNGYESDEQEKSAYQDYDSDSDV). Residue Lys963 forms a Glycyl lysine isopeptide (Lys-Gly) (interchain with G-Cter in SUMO1); alternate linkage. Lys963 participates in a covalent cross-link: Glycyl lysine isopeptide (Lys-Gly) (interchain with G-Cter in SUMO2); alternate.

Belongs to the syndetin family. In terms of assembly, component of the endosome-associated retrograde protein (EARP) complex, composed of VPS51, VPS52, VPS53 and VPS50/Syndetin. The EARP complex interacts with EIPR1. Interacts with VPS51 and VPS53 in an EIPR1-independent manner.

It localises to the recycling endosome. It is found in the membrane. In terms of biological role, acts as a component of the EARP complex that is involved in endocytic recycling. The EARP complex associates with Rab4-positive endosomes and promotes recycling of internalized transferrin receptor (TFRC) to the plasma membrane. Within the EARP complex, required to tether the complex to recycling endosomes. Not involved in retrograde transport from early and late endosomes to the trans-Golgi network (TGN). This chain is Syndetin, found in Mus musculus (Mouse).